A 193-amino-acid polypeptide reads, in one-letter code: Probable nicotinate-nucleotide adenylyltransferase (193 aa).

Belongs to the NadD family.

It carries out the reaction nicotinate beta-D-ribonucleotide + ATP + H(+) = deamido-NAD(+) + diphosphate. The protein operates within cofactor biosynthesis; NAD(+) biosynthesis; deamido-NAD(+) from nicotinate D-ribonucleotide: step 1/1. Functionally, catalyzes the reversible adenylation of nicotinate mononucleotide (NaMN) to nicotinic acid adenine dinucleotide (NaAD). The chain is Probable nicotinate-nucleotide adenylyltransferase from Coprothermobacter proteolyticus (strain ATCC 35245 / DSM 5265 / OCM 4 / BT).